The primary structure comprises 492 residues: Serine incorporator 4 (492 aa).

10 helical membrane passes run 58–78 (FYIL…SKTV), 113–133 (AVYR…VLLV), 148–168 (SFWS…FCIP), 179–199 (IGIC…TAFA), 217–237 (FLGV…GAVL), 254–274 (LLSL…APCI), 281–301 (SGLL…FSAL), 330–350 (IPDA…VLFA), 421–441 (GFHF…TNWF), and 464–484 (VASC…PLLA).

This sequence belongs to the TDE1 family.

The protein localises to the membrane. In terms of biological role, incorporates a polar amino acid serine into membranes and facilitates the synthesis of two serine-derived lipids, phosphatidylserine and sphingolipids. This Rattus norvegicus (Rat) protein is Serine incorporator 4 (Serinc4).